A 991-amino-acid polypeptide reads, in one-letter code: Translation initiation factor IF-2 (991 aa).

Disordered regions lie at residues 126–220 (QADH…DVGE) and 325–359 (VKAA…VDEK). Composition is skewed to polar residues over residues 138-160 (QTES…TEPA) and 201-210 (PAAQTESAVQ). Residues 326 to 340 (KAAGDGDTAPAADDA) show a composition bias toward low complexity. Residues 343 to 353 (GKKKPGKKKKK) show a composition bias toward basic residues. The tr-type G domain occupies 488 to 658 (IRPPVVTIMG…LTEAEIRELK (171 aa)). The segment at 497–504 (GHVDHGKT) is G1. 497-504 (GHVDHGKT) serves as a coordination point for GTP. The segment at 522–526 (GITQH) is G2. Residues 544–547 (DTPG) are G3. Residues 544-548 (DTPGH) and 598-601 (NKID) contribute to the GTP site. Residues 598 to 601 (NKID) form a G4 region. The G5 stretch occupies residues 634–636 (SAK).

It belongs to the TRAFAC class translation factor GTPase superfamily. Classic translation factor GTPase family. IF-2 subfamily.

The protein localises to the cytoplasm. One of the essential components for the initiation of protein synthesis. Protects formylmethionyl-tRNA from spontaneous hydrolysis and promotes its binding to the 30S ribosomal subunits. Also involved in the hydrolysis of GTP during the formation of the 70S ribosomal complex. The protein is Translation initiation factor IF-2 of Chlorobium phaeobacteroides (strain DSM 266 / SMG 266 / 2430).